Reading from the N-terminus, the 161-residue chain is UPF0262 protein mll6455 (161 aa).

It belongs to the UPF0262 family.

This Mesorhizobium japonicum (strain LMG 29417 / CECT 9101 / MAFF 303099) (Mesorhizobium loti (strain MAFF 303099)) protein is UPF0262 protein mll6455.